The chain runs to 515 residues: Pisatin demethylase (515 aa).

Heme is bound at residue C453.

Belongs to the cytochrome P450 family. Heme serves as cofactor.

Functionally, can detoxify the phytoalexin pisatin from garden pea. Pisatin is an antimicrobial compound produced by pea in response to infection by plant pathogens. The polypeptide is Pisatin demethylase (PDAT9) (Fusarium vanettenii (Neocosmospora pisi)).